Reading from the N-terminus, the 326-residue chain is MQITVREALRDAMQEEMIRDDKVFVMGEEVAEYQGAYKVTQGLLEQFGPKRVIDTPITEYGFAGLAVGAAFAGLRPIVEFMTFNFAMQAFDHIVNSAAKTHYMSGGQAKCPIVFRGPNGAASRVAAQHSQNYTACYSHVPGLKVVAPYSAEDHKGLMLTAIRDDNPVIFLENEILYGHSFDVPETIEPIPFGQAKILREGSSVTIVTFSIQVKLALDAANVLQNDNIDCEVIDLRTIKPLDTDTIIESVKKTNRLVIVEEGWFFAGVGASIASIVMKEAFDYLDAPIEIVSGKDVPLPFAVNLEKLALPSESDVIEAVKKVCYYSV.

Glu-59 lines the thiamine diphosphate pocket.

In terms of assembly, heterodimer of an alpha and a beta chain. Requires thiamine diphosphate as cofactor.

The enzyme catalyses N(6)-[(R)-lipoyl]-L-lysyl-[protein] + pyruvate + H(+) = N(6)-[(R)-S(8)-acetyldihydrolipoyl]-L-lysyl-[protein] + CO2. Functionally, the pyruvate dehydrogenase complex catalyzes the overall conversion of pyruvate to acetyl-CoA and CO(2). It contains multiple copies of three enzymatic components: pyruvate dehydrogenase (E1), dihydrolipoamide acetyltransferase (E2) and lipoamide dehydrogenase (E3). The chain is Pyruvate dehydrogenase E1 component subunit beta (pdhB) from Rickettsia felis (strain ATCC VR-1525 / URRWXCal2) (Rickettsia azadi).